We begin with the raw amino-acid sequence, 177 residues long: Large ribosomal subunit protein uL6 (177 aa).

The protein belongs to the universal ribosomal protein uL6 family. As to quaternary structure, part of the 50S ribosomal subunit.

Functionally, this protein binds to the 23S rRNA, and is important in its secondary structure. It is located near the subunit interface in the base of the L7/L12 stalk, and near the tRNA binding site of the peptidyltransferase center. The polypeptide is Large ribosomal subunit protein uL6 (Rhodopseudomonas palustris (strain BisB5)).